A 297-amino-acid polypeptide reads, in one-letter code: MNLGTLVSETRNPQTMDLDALSTPELVKRFNEQDTRVAEAVKATLPDVARAVDAAAAALKSGGRIIYMGAGTSGRLGVLDASECPPTFGVPHGLVVGLIAGGPGALLKAVEGAEDSQQAGEDDLVALNLQEQDLVVGLAASGRTPYVIGGLRYARQSGCTTVAVSCNPDSPIAREANIAISPVVGPEALTGSTRLKSGTAQKMVLNMISTGAMVKFGKVYQNLMVDMKATNVKLVDRACRMVVEATGIGREEAETLLKQTDFEVKPAILMALTGLDAAAAREKLAAHQGFLRAALEH.

The SIS domain occupies 55–218 (AAAALKSGGR…STGAMVKFGK (164 aa)). Glutamate 83 (proton donor) is an active-site residue. Glutamate 114 is an active-site residue.

Belongs to the GCKR-like family. MurNAc-6-P etherase subfamily. In terms of assembly, homodimer.

It carries out the reaction N-acetyl-D-muramate 6-phosphate + H2O = N-acetyl-D-glucosamine 6-phosphate + (R)-lactate. It participates in amino-sugar metabolism; 1,6-anhydro-N-acetylmuramate degradation. It functions in the pathway amino-sugar metabolism; N-acetylmuramate degradation. The protein operates within cell wall biogenesis; peptidoglycan recycling. In terms of biological role, specifically catalyzes the cleavage of the D-lactyl ether substituent of MurNAc 6-phosphate, producing GlcNAc 6-phosphate and D-lactate. Together with AnmK, is also required for the utilization of anhydro-N-acetylmuramic acid (anhMurNAc) either imported from the medium or derived from its own cell wall murein, and thus plays a role in cell wall recycling. The protein is N-acetylmuramic acid 6-phosphate etherase of Salmonella agona (strain SL483).